Consider the following 212-residue polypeptide: Ribosomal RNA small subunit methyltransferase G (212 aa).

S-adenosyl-L-methionine-binding positions include Gly80, Leu85, 131–132 (AE), and Arg146.

This sequence belongs to the methyltransferase superfamily. RNA methyltransferase RsmG family.

Its subcellular location is the cytoplasm. It carries out the reaction guanosine(527) in 16S rRNA + S-adenosyl-L-methionine = N(7)-methylguanosine(527) in 16S rRNA + S-adenosyl-L-homocysteine. Its function is as follows. Specifically methylates the N7 position of guanine in position 527 of 16S rRNA. This is Ribosomal RNA small subunit methyltransferase G from Xanthomonas campestris pv. campestris (strain 8004).